The primary structure comprises 23 residues: Caerin-4.1 (23 aa).

In terms of tissue distribution, expressed by the skin parotoid and/or rostral glands.

The protein localises to the secreted. Its function is as follows. Antibacterial peptide, that adopts an alpha helical conformation which can disrupt bacterial membranes. Each caerin displays a different antimicrobial specificity. This is Caerin-4.1 from Ranoidea caerulea (Green tree frog).